A 151-amino-acid chain; its full sequence is Pyruvoyl-dependent arginine decarboxylase (151 aa).

Pyruvic acid (Ser) is present on serine 42.

This sequence belongs to the PdaD family. Requires pyruvate as cofactor.

It catalyses the reaction L-arginine + H(+) = agmatine + CO2. This is Pyruvoyl-dependent arginine decarboxylase from Methanothermobacter thermautotrophicus (strain ATCC 29096 / DSM 1053 / JCM 10044 / NBRC 100330 / Delta H) (Methanobacterium thermoautotrophicum).